Consider the following 225-residue polypeptide: Ribosomal RNA small subunit methyltransferase G (225 aa).

Residues glycine 89, leucine 94, isoleucine 140 to glutamate 141, and arginine 157 contribute to the S-adenosyl-L-methionine site.

It belongs to the methyltransferase superfamily. RNA methyltransferase RsmG family.

The protein resides in the cytoplasm. The enzyme catalyses guanosine(527) in 16S rRNA + S-adenosyl-L-methionine = N(7)-methylguanosine(527) in 16S rRNA + S-adenosyl-L-homocysteine. In terms of biological role, specifically methylates the N7 position of guanine in position 527 of 16S rRNA. This chain is Ribosomal RNA small subunit methyltransferase G, found in Psychrobacter sp. (strain PRwf-1).